We begin with the raw amino-acid sequence, 75 residues long: Alpha-elapitoxin-Bc2a (75 aa).

Residues 1 to 2 (YT) form the signal peptide. 5 disulfides stabilise this stretch: C5–C24, C17–C45, C30–C34, C49–C60, and C61–C66.

It belongs to the three-finger toxin family. Long-chain subfamily. Type II alpha-neurotoxin sub-subfamily. As to quaternary structure, monomer in solution, homodimer in crystal state. In terms of tissue distribution, expressed by the venom gland.

It is found in the secreted. Functionally, binds to muscular and neuronal nicotinic acetylcholine receptor (nAChR) and inhibits acetylcholine from binding to the receptor, thereby impairing neuromuscular and neuronal transmission. Reversibly blocks chick and mouse muscle nicotinic acetylcholine receptors. Blocks muscle type nAChR with an IC(50)=30 nM, when heterologously expressed in oocytes. Also binds with high affinity to alpha-7/CHRNA7 nAChRs. In addition, shows a weak inhibition of neuronal alpha-3-beta-2/CHRNA3-CHRNB2 nAChR (IC(50)=2.9 uM). Selectively binds to alpha-1-delta subunit interface of the mouse muscle nicotinic acetylcholine receptor, with a 10-fold higher affinity for the adult than for the fetal receptors. In vivo, when intraperitoneally injected into mice, causes flaccid paralysis and respiratory distress, followed by death within 2-4 hours. The polypeptide is Alpha-elapitoxin-Bc2a (Bungarus candidus (Malayan krait)).